The sequence spans 265 residues: Thiazole synthase (265 aa).

The Schiff-base intermediate with DXP role is filled by lysine 107. 1-deoxy-D-xylulose 5-phosphate is bound by residues glycine 168, 194-195, and 216-217; these read AG and NT.

It belongs to the ThiG family. As to quaternary structure, homotetramer. Forms heterodimers with either ThiH or ThiS.

The protein resides in the cytoplasm. The catalysed reaction is [ThiS sulfur-carrier protein]-C-terminal-Gly-aminoethanethioate + 2-iminoacetate + 1-deoxy-D-xylulose 5-phosphate = [ThiS sulfur-carrier protein]-C-terminal Gly-Gly + 2-[(2R,5Z)-2-carboxy-4-methylthiazol-5(2H)-ylidene]ethyl phosphate + 2 H2O + H(+). It functions in the pathway cofactor biosynthesis; thiamine diphosphate biosynthesis. Catalyzes the rearrangement of 1-deoxy-D-xylulose 5-phosphate (DXP) to produce the thiazole phosphate moiety of thiamine. Sulfur is provided by the thiocarboxylate moiety of the carrier protein ThiS. In vitro, sulfur can be provided by H(2)S. This chain is Thiazole synthase, found in Pseudomonas aeruginosa (strain LESB58).